A 30-amino-acid polypeptide reads, in one-letter code: Cycloviolacin-O24 (30 aa).

The cyclopeptide (Gly-Asn) cross-link spans 1–30; the sequence is GLPTCGETCFGGTCNTPGCTCDPWPVCTHN. Disulfide bonds link cysteine 5–cysteine 19, cysteine 9–cysteine 21, and cysteine 14–cysteine 27.

This is a cyclic peptide. Expressed in leaves but not in petals, petioles, roots and runners (at protein level).

In terms of biological role, probably participates in a plant defense mechanism. Has hemolytic activity. The polypeptide is Cycloviolacin-O24 (Viola odorata (Sweet violet)).